The chain runs to 104 residues: Protein Rev (104 aa).

Position 5 is a phosphoserine; by host CK2 (Ser-5). Positions 18 to 26 are homomultimerization; that stretch reads VIKILYQSN. The span at 25-34 shows a compositional bias: polar residues; it reads SNPYPNSKGT. Disordered regions lie at residues 25 to 48 and 63 to 104; these read SNPY…WRAR and CLGG…ATTE. The Nuclear localization signal and RNA-binding (RRE) signature appears at 34-50; the sequence is TRQARRNRRRRWRARQR. The segment covering 35-48 has biased composition (basic residues); sequence RQARRNRRRRWRAR. Pro residues predominate over residues 67-77; sequence PPEPVDLPLPP. The Nuclear export signal and binding to XPO1 signature appears at 73 to 84; it reads LPLPPLDRLTLD. Over residues 91–104 the composition is skewed to polar residues; that stretch reads TPGTESQQGTATTE.

This sequence belongs to the HIV-1 REV protein family. In terms of assembly, homomultimer; when bound to the RRE. Multimeric assembly is essential for activity and may involve XPO1. Binds to human KPNB1, XPO1, TNPO1, RANBP5 and IPO7. Interacts with the viral Integrase. Interacts with human KHDRBS1. Interacts with human NAP1; this interaction decreases Rev multimerization and stimulates its activity. Interacts with human DEAD-box helicases DDX3 and DDX24; these interactions may serve for viral RNA export to the cytoplasm and packaging, respectively. Interacts with human PSIP1; this interaction may inhibit HIV-1 DNA integration by promoting dissociation of the Integrase-LEDGF/p75 complex. In terms of processing, asymmetrically arginine dimethylated at one site by host PRMT6. Methylation impairs the RNA-binding activity and export of viral RNA from the nucleus to the cytoplasm. Post-translationally, phosphorylated by protein kinase CK2. Presence of, and maybe binding to the N-terminus of the regulatory beta subunit of CK2 is necessary for CK2-mediated Rev's phosphorylation.

The protein localises to the host nucleus. Its subcellular location is the host nucleolus. It is found in the host cytoplasm. Escorts unspliced or incompletely spliced viral pre-mRNAs (late transcripts) out of the nucleus of infected cells. These pre-mRNAs carry a recognition sequence called Rev responsive element (RRE) located in the env gene, that is not present in fully spliced viral mRNAs (early transcripts). This function is essential since most viral proteins are translated from unspliced or partially spliced pre-mRNAs which cannot exit the nucleus by the pathway used by fully processed cellular mRNAs. Rev itself is translated from a fully spliced mRNA that readily exits the nucleus. Rev's nuclear localization signal (NLS) binds directly to KPNB1/Importin beta-1 without previous binding to KPNA1/Importin alpha-1. KPNB1 binds to the GDP bound form of RAN (Ran-GDP) and targets Rev to the nucleus. In the nucleus, the conversion from Ran-GDP to Ran-GTP dissociates Rev from KPNB1 and allows Rev's binding to the RRE in viral pre-mRNAs. Rev multimerization on the RRE via cooperative assembly exposes its nuclear export signal (NES) to the surface. Rev can then form a complex with XPO1/CRM1 and Ran-GTP, leading to nuclear export of the complex. Conversion from Ran-GTP to Ran-GDP mediates dissociation of the Rev/RRE/XPO1/RAN complex, so that Rev can return to the nucleus for a subsequent round of export. Beside KPNB1, also seems to interact with TNPO1/Transportin-1, RANBP5/IPO5 and IPO7/RANBP7 for nuclear import. The nucleoporin-like HRB/RIP is an essential cofactor that probably indirectly interacts with Rev to release HIV RNAs from the perinuclear region to the cytoplasm. The sequence is that of Protein Rev from Human immunodeficiency virus type 1 group N (isolate YBF30) (HIV-1).